The following is a 357-amino-acid chain: MHLSNFYFKIPKSLIAFYPCFIRSQSRLLIINGHTGKIAHKFFFNILNEINSGDLIIFNDTKVIPARLFGYKKSGGRVEVLLERILNKNSILASIKSSNEIKMNSYLFFGKKNKIKSFIIGYKNPFYIIKFLHNKKSVIDIFNNIGHIPLPPYIKRFNEKIDSSLYQTVYKKNLGSVAAPTAGLHFDLPLLEALSKKGVDIDFLTLHIGSGTFQPIRTAKIEKHIMHSELVEVSSNLIQKIKLCKKKGGRIIAVGTTTLRALESAYHSNSWNNKKNYVKDTNIFIYPGYKHNVVDALITNFHFPESTLIMLVCSFLGYKNTMNAYHEAIKNNYRFFSYGDAMYITYNTHAPYEKILT.

The protein belongs to the QueA family. As to quaternary structure, monomer.

The protein resides in the cytoplasm. The enzyme catalyses 7-aminomethyl-7-carbaguanosine(34) in tRNA + S-adenosyl-L-methionine = epoxyqueuosine(34) in tRNA + adenine + L-methionine + 2 H(+). The protein operates within tRNA modification; tRNA-queuosine biosynthesis. Functionally, transfers and isomerizes the ribose moiety from AdoMet to the 7-aminomethyl group of 7-deazaguanine (preQ1-tRNA) to give epoxyqueuosine (oQ-tRNA). This chain is S-adenosylmethionine:tRNA ribosyltransferase-isomerase, found in Buchnera aphidicola subsp. Schizaphis graminum (strain Sg).